We begin with the raw amino-acid sequence, 432 residues long: Alpha-galactosidase (432 aa).

2–68 (KKITFIGAGS…PSVAINSYDD (67 aa)) provides a ligand contact to NAD(+). Asparagine 148 contacts substrate. Cysteine 169 is a Mn(2+) binding site. The Proton donor role is filled by histidine 170. Histidine 199 provides a ligand contact to Mn(2+).

This sequence belongs to the glycosyl hydrolase 4 family. Homodimer. Requires Mn(2+) as cofactor. It depends on NAD(+) as a cofactor.

The protein resides in the cytoplasm. It carries out the reaction Hydrolysis of terminal, non-reducing alpha-D-galactose residues in alpha-D-galactosides, including galactose oligosaccharides, galactomannans and galactolipids.. Catalyzes the hydrolysis of melibiose and alpha-galactosides of the raffinose family of oligosaccharides (RFOs) such as raffinose and stachyose. Cannot act on polymeric substrates such as locust bean gum. This Bacillus subtilis (strain 168) protein is Alpha-galactosidase.